The sequence spans 341 residues: ATPase GET3 (341 aa).

34-41 is a binding site for ATP; that stretch reads KGGVGKTT. Asp63 is an active-site residue. ATP is bound by residues Glu245 and Asn272. The Zn(2+) site is built by Cys283 and Cys286.

This sequence belongs to the arsA ATPase family. In terms of assembly, homodimer.

The protein localises to the cytoplasm. It is found in the endoplasmic reticulum. Its function is as follows. ATPase required for the post-translational delivery of tail-anchored (TA) proteins to the endoplasmic reticulum. Recognizes and selectively binds the transmembrane domain of TA proteins in the cytosol. This complex then targets to the endoplasmic reticulum by membrane-bound receptors, where the tail-anchored protein is released for insertion. This process is regulated by ATP binding and hydrolysis. ATP binding drives the homodimer towards the closed dimer state, facilitating recognition of newly synthesized TA membrane proteins. ATP hydrolysis is required for insertion. Subsequently, the homodimer reverts towards the open dimer state, lowering its affinity for the membrane-bound receptor, and returning it to the cytosol to initiate a new round of targeting. This Ajellomyces capsulatus (strain H143) (Darling's disease fungus) protein is ATPase GET3.